Consider the following 369-residue polypeptide: Isopentenyl-diphosphate delta-isomerase (369 aa).

Residue 9 to 10 coordinates substrate; sequence RK. Residues Thr65, 66-68, Ser96, and Asn125 each bind FMN; that span reads GMT. Substrate is bound at residue 96-98; sequence SQR. Gln160 serves as a coordination point for substrate. Residue Glu161 participates in Mg(2+) binding. Residues Lys193, Ser218, Thr223, 275-277, and 296-297 contribute to the FMN site; these read GVR and AL.

This sequence belongs to the IPP isomerase type 2 family. In terms of assembly, homooctamer. Dimer of tetramers. FMN is required as a cofactor. NADPH serves as cofactor. It depends on Mg(2+) as a cofactor.

The protein resides in the cytoplasm. It catalyses the reaction isopentenyl diphosphate = dimethylallyl diphosphate. In terms of biological role, involved in the biosynthesis of isoprenoids. Catalyzes the 1,3-allylic rearrangement of the homoallylic substrate isopentenyl (IPP) to its allylic isomer, dimethylallyl diphosphate (DMAPP). The chain is Isopentenyl-diphosphate delta-isomerase from Sulfurisphaera tokodaii (strain DSM 16993 / JCM 10545 / NBRC 100140 / 7) (Sulfolobus tokodaii).